Consider the following 106-residue polypeptide: Iron-sulfur cluster assembly protein CyaY (106 aa).

The protein belongs to the frataxin family.

Involved in iron-sulfur (Fe-S) cluster assembly. May act as a regulator of Fe-S biogenesis. This Pectobacterium atrosepticum (strain SCRI 1043 / ATCC BAA-672) (Erwinia carotovora subsp. atroseptica) protein is Iron-sulfur cluster assembly protein CyaY.